We begin with the raw amino-acid sequence, 264 residues long: 3-deoxy-manno-octulosonate cytidylyltransferase (264 aa).

It belongs to the KdsB family.

The protein resides in the cytoplasm. The enzyme catalyses 3-deoxy-alpha-D-manno-oct-2-ulosonate + CTP = CMP-3-deoxy-beta-D-manno-octulosonate + diphosphate. Its pathway is nucleotide-sugar biosynthesis; CMP-3-deoxy-D-manno-octulosonate biosynthesis; CMP-3-deoxy-D-manno-octulosonate from 3-deoxy-D-manno-octulosonate and CTP: step 1/1. It functions in the pathway bacterial outer membrane biogenesis; lipopolysaccharide biosynthesis. Activates KDO (a required 8-carbon sugar) for incorporation into bacterial lipopolysaccharide in Gram-negative bacteria. The chain is 3-deoxy-manno-octulosonate cytidylyltransferase from Methylibium petroleiphilum (strain ATCC BAA-1232 / LMG 22953 / PM1).